A 118-amino-acid chain; its full sequence is Large ribosomal subunit protein bL17 (118 aa).

Belongs to the bacterial ribosomal protein bL17 family. As to quaternary structure, part of the 50S ribosomal subunit. Contacts protein L32.

The protein is Large ribosomal subunit protein bL17 of Aster yellows witches'-broom phytoplasma (strain AYWB).